The primary structure comprises 249 residues: tRNA (guanine-N(7)-)-methyltransferase (249 aa).

The segment at 1 to 24 (MHSIPADTGHTPSRAPAGNGSPPA) is disordered. Residues Glu81, Glu106, Asp133, and Asp156 each coordinate S-adenosyl-L-methionine. The active site involves Asp156. Lys160 is a substrate binding site. The segment at 162-167 (RHNKRR) is interaction with RNA. Substrate contacts are provided by residues Asp192 and 227–230 (TKFE).

It belongs to the class I-like SAM-binding methyltransferase superfamily. TrmB family.

The enzyme catalyses guanosine(46) in tRNA + S-adenosyl-L-methionine = N(7)-methylguanosine(46) in tRNA + S-adenosyl-L-homocysteine. It functions in the pathway tRNA modification; N(7)-methylguanine-tRNA biosynthesis. Functionally, catalyzes the formation of N(7)-methylguanine at position 46 (m7G46) in tRNA. This Paracidovorax citrulli (strain AAC00-1) (Acidovorax citrulli) protein is tRNA (guanine-N(7)-)-methyltransferase.